The chain runs to 262 residues: Succinate dehydrogenase [ubiquinone] iron-sulfur subunit (262 aa).

Positions Lys21 to Pro110 constitute a 2Fe-2S ferredoxin-type domain. 4 residues coordinate [2Fe-2S] cluster: Cys73, Cys78, Cys81, and Cys93. Residues Asp154–Tyr184 form the 4Fe-4S ferredoxin-type domain. [4Fe-4S] cluster-binding residues include Cys164, Cys167, and Cys170. Residue Cys174 coordinates [3Fe-4S] cluster. Trp179 contacts a ubiquinone. Residues Cys221 and Cys227 each coordinate [3Fe-4S] cluster. Position 231 (Cys231) interacts with [4Fe-4S] cluster.

The protein belongs to the succinate dehydrogenase/fumarate reductase iron-sulfur protein family. Component of complex II composed of four subunits: a flavoprotein (FP), an iron-sulfur protein (IP), and a cytochrome b composed of a large and a small subunit. It depends on [2Fe-2S] cluster as a cofactor. [3Fe-4S] cluster serves as cofactor. Requires [4Fe-4S] cluster as cofactor.

It localises to the mitochondrion inner membrane. It catalyses the reaction a quinone + succinate = fumarate + a quinol. Its pathway is carbohydrate metabolism; tricarboxylic acid cycle; fumarate from succinate (eukaryal route): step 1/1. Its function is as follows. Iron-sulfur protein (IP) subunit of succinate dehydrogenase (SDH) that is involved in complex II of the mitochondrial electron transport chain and is responsible for transferring electrons from succinate to ubiquinone (coenzyme Q). The chain is Succinate dehydrogenase [ubiquinone] iron-sulfur subunit (SDH2) from Cyanidium caldarium (Red alga).